We begin with the raw amino-acid sequence, 573 residues long: Adenine deaminase (573 aa).

This sequence belongs to the metallo-dependent hydrolases superfamily. Adenine deaminase family. Mn(2+) is required as a cofactor.

The catalysed reaction is adenine + H2O + H(+) = hypoxanthine + NH4(+). The sequence is that of Adenine deaminase from Bacillus licheniformis (strain ATCC 14580 / DSM 13 / JCM 2505 / CCUG 7422 / NBRC 12200 / NCIMB 9375 / NCTC 10341 / NRRL NRS-1264 / Gibson 46).